Consider the following 64-residue polypeptide: Large ribosomal subunit protein uL29 (64 aa).

This sequence belongs to the universal ribosomal protein uL29 family.

This Chloroherpeton thalassium (strain ATCC 35110 / GB-78) protein is Large ribosomal subunit protein uL29.